The sequence spans 779 residues: Endonuclease MutS2 (779 aa).

328-335 (GPNTGGKT) is a binding site for ATP. In terms of domain architecture, Smr spans 704–779 (LDLRGKRYEE…GSGATIVTLG (76 aa)).

This sequence belongs to the DNA mismatch repair MutS family. MutS2 subfamily. As to quaternary structure, homodimer. Binds to stalled ribosomes, contacting rRNA.

In terms of biological role, endonuclease that is involved in the suppression of homologous recombination and thus may have a key role in the control of bacterial genetic diversity. Acts as a ribosome collision sensor, splitting the ribosome into its 2 subunits. Detects stalled/collided 70S ribosomes which it binds and splits by an ATP-hydrolysis driven conformational change. Acts upstream of the ribosome quality control system (RQC), a ribosome-associated complex that mediates the extraction of incompletely synthesized nascent chains from stalled ribosomes and their subsequent degradation. Probably generates substrates for RQC. The polypeptide is Endonuclease MutS2 (Streptococcus pyogenes serotype M49 (strain NZ131)).